The chain runs to 750 residues: Glutamate carboxypeptidase 2 (750 aa).

The Cytoplasmic segment spans residues 1-19 (MWNLLHETDSAVATARRPR). Ser10 bears the Phosphoserine mark. A helical; Signal-anchor for type II membrane protein membrane pass occupies residues 20–43 (WLCAGALVLAGGFFLLGFLFGWFI). Residues 44 to 750 (KSSNEATNIT…AAAETLSEVA (707 aa)) are Extracellular-facing. Residues Asn51, Asn76, Asn121, Asn140, Asn153, and Asn195 are each glycosylated (N-linked (GlcNAc...) asparagine). Substrate contacts are provided by Arg210 and Asn257. Ca(2+)-binding residues include Thr269 and Tyr272. The tract at residues 274-587 (ANEYAYRRGI…QVRGGMVFEL (314 aa)) is NAALADase. Asn336 carries an N-linked (GlcNAc...) asparagine glycan. Positions 377 and 387 each coordinate Zn(2+). Glu424 is a binding site for substrate. The active-site Nucleophile; for NAALADase activity is the Glu424. Residue Glu425 coordinates Zn(2+). Residues Glu433 and Glu436 each contribute to the Ca(2+) site. Residue Asp453 participates in Zn(2+) binding. N-linked (GlcNAc...) asparagine glycosylation is found at Asn459 and Asn476. Residues 517 to 518 (SG), Asn519, 534 to 536 (RAR), Tyr552, and 552 to 553 (YH) contribute to the substrate site. Position 553 (His553) interacts with Zn(2+). Ser628 functions as the Charge relay system in the catalytic mechanism. The N-linked (GlcNAc...) asparagine glycan is linked to Asn638. Active-site charge relay system residues include Asp666 and His689. 699-700 (KY) contacts substrate.

This sequence belongs to the peptidase M28 family. M28B subfamily. Homodimer. Zn(2+) serves as cofactor. Post-translationally, the first two amino acids at the N-terminus of isoform PSMA' appear to be cleaved by limited proteolysis. In terms of processing, the N-terminus is blocked. In terms of tissue distribution, highly expressed in prostate epithelium. Detected in urinary bladder, kidney, testis, ovary, fallopian tube, breast, adrenal gland, liver, esophagus, stomach, small intestine, colon and brain (at protein level). Detected in the small intestine, brain, kidney, liver, spleen, colon, trachea, spinal cord and the capillary endothelium of a variety of tumors. Expressed specifically in jejunum brush border membranes. In the brain, highly expressed in the ventral striatum and brain stem. Also expressed in fetal liver and kidney. Isoform PSMA' is the most abundant form in normal prostate. Isoform PSMA-1 is the most abundant form in primary prostate tumors. Isoform PSMA-9 is specifically expressed in prostate cancer.

It is found in the cell membrane. The protein localises to the cytoplasm. The catalysed reaction is Release of an unsubstituted, C-terminal glutamyl residue, typically from Ac-Asp-Glu or folylpoly-gamma-glutamates.. The NAALADase activity is inhibited by beta-NAAG, quisqualic acid, 2-(phosphonomethyl) pentanedioic acid (PMPA) and EDTA. Activated by cobalt. In terms of biological role, has both folate hydrolase and N-acetylated-alpha-linked-acidic dipeptidase (NAALADase) activity. Has a preference for tri-alpha-glutamate peptides. In the intestine, required for the uptake of folate. In the brain, modulates excitatory neurotransmission through the hydrolysis of the neuropeptide, N-aceylaspartylglutamate (NAAG), thereby releasing glutamate. Involved in prostate tumor progression. Its function is as follows. Also exhibits a dipeptidyl-peptidase IV type activity. In vitro, cleaves Gly-Pro-AMC. The protein is Glutamate carboxypeptidase 2 of Homo sapiens (Human).